A 338-amino-acid chain; its full sequence is Putative transport protein TM_1349 (338 aa).

Helical transmembrane passes span 20 to 40 (ILISFLVFKIFPDVFAVIVLM), 68 to 88 (ALLLFFFVMVYSLYMIIPPVF), 147 to 167 (VSVTTIIVFTLFGLGYTVFYI), 203 to 223 (VIFINAVIIGLSYWIVFEAFN), 239 to 259 (FIPIVGVVLEYIPVLLFSLTL), 263 to 283 (GVLLIALFAILIHAVAFVVFI), and 297 to 317 (IILSILFFGKLFGLFGSFVGV).

The protein belongs to the autoinducer-2 exporter (AI-2E) (TC 2.A.86) family.

The protein resides in the cell membrane. This chain is Putative transport protein TM_1349, found in Thermotoga maritima (strain ATCC 43589 / DSM 3109 / JCM 10099 / NBRC 100826 / MSB8).